A 2271-amino-acid polypeptide reads, in one-letter code: Serine-rich adhesin for platelets (2271 aa).

The first 89 residues, 1 to 89 (MSKRQKAFHD…VNMLHDQQAF (89 aa)), serve as a signal peptide directing secretion. The interval 90–230 (AASDAPLTSE…KTSTTSTSTA (141 aa)) is serine-rich repeat region 1, SRR1. Residues 100–111 (LNTQSETVGNQN) show a composition bias toward polar residues. Positions 100 to 229 (LNTQSETVGN…NKTSTTSTST (130 aa)) are disordered. Low complexity predominate over residues 112–128 (STTIEASTSTADSTSVT). The span at 129-140 (KNSSSVQTSNSD) shows a compositional bias: polar residues. Positions 150–229 (VTSTTNSTSN…NKTSTTSTST (80 aa)) are enriched in low complexity. A non-repeat region (NRR) region spans residues 231–751 (PVKLRTFSRL…TTFKYEVTRN (521 aa)). Residues 245 to 491 (FASAATTTAV…QQVQFGTFEY (247 aa)) form an L-lectin module region. Ca(2+)-binding residues include aspartate 365, tyrosine 367, asparagine 369, and aspartate 382. The interval 492 to 571 (TESAVTQVRY…NAGQSVTYYF (80 aa)) is beta-grasp module. The segment at 572–659 (TDVKAPTVTV…KSTTTFTINV (88 aa)) is cadherin-like module-1. Ca(2+) is bound by residues aspartate 573, lysine 575, aspartate 601, asparagine 602, aspartate 645, aspartate 661, threonine 663, aspartate 690, asparagine 691, and aspartate 734. The segment at 660 to 751 (VDTTAPTVTP…TTFKYEVTRN (92 aa)) is cadherin-like module-2. 2 disordered regions span residues 751–791 (NSMS…VVST) and 806–2242 (SVSA…NGLL). Low complexity-rich tracts occupy residues 752-791 (SMSDSVSTSGSTQQSQSVSTSKADSQSASTSTSGSIVVST), 806-1392 (SVSA…LSLS), and 1402-2214 (SNSA…ATSE). A serine-rich repeat region 2, SRR2 region spans residues 752-2232 (SMSDSVSTSG…AQSEKRLPDT (1481 aa)). Residues 2229 to 2233 (LPDTG) carry the LPXTG sorting signal motif. Threonine 2232 carries the post-translational modification Pentaglycyl murein peptidoglycan amidated threonine. The propeptide at 2233 to 2271 (GDSIKQNGLLGGVMTLLVGLGLMKRKKKKDENDQDDSQA) is removed by sortase.

The protein belongs to the serine-rich repeat protein (SRRP) family. Proteolytically cleaved by a metalloprotease. Post-translationally, glycosylated. It is probable that most of the Ser residues in SSR1 and SSR2 are O-GlcNAcylated. Sequential glycosylation by sugar transferases are able to generate complex sugar polymorphisms.

The protein localises to the secreted. The protein resides in the cell wall. Functionally, mediates binding to human platelets, possibly through a receptor-ligand interaction. Probably associated with virulence in endovascular infection. Plays a positive role in biofilm formation, possibly by self-association via the non-repeat region (NRR or binding region, BR). Binds to and plays a role in human lung epithelial cell invasion via the L-lectin module of its NRR domain; N-acetylneuraminic acid (Neu5Ac) inhibits binding. Treatment of host cells with neuraminidase decreases adherence of S.aureus cells, suggesting SraP recognizes a host terminal Neu5Ac moiety as a receptor. The chain is Serine-rich adhesin for platelets from Staphylococcus aureus (strain NCTC 8325 / PS 47).